The chain runs to 309 residues: Pyridoxal kinase (309 aa).

At T2 the chain carries N-acetylthreonine; in Pyridoxal kinase, N-terminally processed. Pyridoxal is bound by residues S23 and T58. T58 contacts pyridoxal 5'-phosphate. Residue D124 coordinates ATP. D124 is a binding site for Na(+). D129 is a binding site for Mg(2+). T155 is a Na(+) binding site. Residues 157 to 160 (NQFE), 193 to 194 (TS), 225 to 227 (IPA), and T232 each bind ATP. Na(+) is bound at residue T193. Pyridoxal 5'-phosphate is bound at residue 233–234 (GD). D234 serves as the catalytic Proton acceptor.

It belongs to the pyridoxine kinase family. Homodimer. Zn(2+) is required as a cofactor. In terms of tissue distribution, expressed ubiquitously in leaves, stems, roots, flowers and siliques. Present in root hairs and other tip-growing cells such as papillar cells on the top of stigma.

It carries out the reaction pyridoxal + ATP = pyridoxal 5'-phosphate + ADP + H(+). It participates in cofactor metabolism; pyridoxal 5'-phosphate salvage; pyridoxal 5'-phosphate from pyridoxal: step 1/1. Functionally, catalyzes the transfer of a phosphate group from ATP to the 5-hydroxylmethyl group of pyridoxal to form the biologically active pyridoxal phosphate, an active form of vitamin B6. Required for Na(+) and K(+) homeostasis and for salt tolerance. Involved in root hair development, both for initiation and tip growth. This chain is Pyridoxal kinase, found in Arabidopsis thaliana (Mouse-ear cress).